A 180-amino-acid chain; its full sequence is Inner membrane-spanning protein YciB (180 aa).

Helical transmembrane passes span 22-42 (IYVA…LTWL), 50-70 (MTLI…VFHN), 76-96 (WKVT…QVVL), 121-141 (AAWA…AFWL), and 149-169 (FKVF…GIYI).

It belongs to the YciB family.

The protein resides in the cell inner membrane. In terms of biological role, plays a role in cell envelope biogenesis, maintenance of cell envelope integrity and membrane homeostasis. This is Inner membrane-spanning protein YciB from Edwardsiella ictaluri (strain 93-146).